We begin with the raw amino-acid sequence, 854 residues long: Aryl hydrocarbon receptor (854 aa).

Residues 1–9 (MSSGANITY) constitute a propeptide that is removed on maturation. Positions 1-38 (MSSGANITYASRKRRKPVQKTVKPIPAEGIKSNPSKRH) are disordered. 2 consecutive short sequence motifs (nuclear localization signal) follow at residues 12 to 15 (RKRR) and 36 to 41 (KRHRDR). Positions 26 to 79 (PAEGIKSNPSKRHRDRLNTELDRLASLLPFPQDVINKLDKLSVLRLSVSYLRAK) constitute a bHLH domain. The DNA-binding stretch occupies residues 37-65 (RHRDRLNTELDRLASLLPFPQDVINKLDK). Required for maintaining the overall integrity of the AHR:ARNT heterodimer and its transcriptional activity stretches follow at residues 49–81 (LASL…AKSF), 116–124 (LLQALNGFV), and 264–266 (FAI). Positions 63–71 (LDKLSVLRL) match the Nuclear export signal motif. The 65-residue stretch at 111–175 (QEGEFLLQAL…AEFQRQLHWA (65 aa)) folds into the PAS 1 domain. The 71-residue stretch at 270 to 340 (LQPPSILEIR…CAESHIRMIK (71 aa)) folds into the PAS 2 domain. In terms of domain architecture, PAC spans 346-387 (MTVFRLLAKHSRWRWVQSNARLIYRNGRPDYIIATQRPLTDE). Residues 425–451 (LPIRTKSNTSRKDWAPQSTPSKDSFHP) form a disordered region. The span at 440–451 (PQSTPSKDSFHP) shows a compositional bias: polar residues.

In terms of assembly, homodimer. Heterodimer; efficient DNA binding requires dimerization with another bHLH protein. Interacts with ARNT; the heterodimer ARNT:AHR binds to core DNA sequence 5'-TGCGTG-3' within the dioxin response element (DRE) of target gene promoters and activates their transcription. Binds MYBBP1A. Interacts with coactivators including SRC-1, RIP140 and NOCA7, and with the corepressor SMRT. Interacts with NEDD8 and IVNS1ABP. Interacts with BMAL1. Interacts with HSP90AB1. Interacts with TIPARP; leading to mono-ADP-ribosylation of AHR and subsequent inhibition of AHR. Post-translationally, mono-ADP-ribosylated, leading to inhibit transcription activator activity of AHR.

The protein resides in the cytoplasm. Its subcellular location is the nucleus. Its function is as follows. Ligand-activated transcription factor that enables cells to adapt to changing conditions by sensing compounds from the environment, diet, microbiome and cellular metabolism, and which plays important roles in development, immunity and cancer. Upon ligand binding, translocates into the nucleus, where it heterodimerizes with ARNT and induces transcription by binding to xenobiotic response elements (XRE). Regulates a variety of biological processes, including angiogenesis, hematopoiesis, drug and lipid metabolism, cell motility and immune modulation. Xenobiotics can act as ligands: upon xenobiotic-binding, activates the expression of multiple phase I and II xenobiotic chemical metabolizing enzyme genes (such as the CYP1A1 gene). Mediates biochemical and toxic effects of halogenated aromatic hydrocarbons. Next to xenobiotics, natural ligands derived from plants, microbiota, and endogenous metabolism are potent AHR agonists. Tryptophan (Trp) derivatives constitute an important class of endogenous AHR ligands. Acts as a negative regulator of anti-tumor immunity: indoles and kynurenic acid generated by Trp catabolism act as ligand and activate AHR, thereby promoting AHR-driven cancer cell motility and suppressing adaptive immunity. Regulates the circadian clock by inhibiting the basal and circadian expression of the core circadian component PER1. Inhibits PER1 by repressing the CLOCK-BMAL1 heterodimer mediated transcriptional activation of PER1. The heterodimer ARNT:AHR binds to core DNA sequence 5'-TGCGTG-3' within the dioxin response element (DRE) of target gene promoters and activates their transcription. The protein is Aryl hydrocarbon receptor (Ahr) of Mus spicilegus (Steppe mouse).